A 632-amino-acid polypeptide reads, in one-letter code: Probable membrane transporter protein MamO (632 aa).

A helical transmembrane segment spans residues 25–45 (APVSILAFLILVTFAWGAYLL). Positions 78–268 (LYYTVPPAVV…VIVSHLQDVV (191 aa)) are protease-like. A divalent metal cation is bound by residues histidine 148 and histidine 263. 7 consecutive transmembrane segments (helical) span residues 340 to 360 (IGGY…AAGV), 412 to 432 (LVQW…VVIG), 434 to 454 (FIGN…FALI), 513 to 533 (AVLG…GGVI), 550 to 570 (IANS…VAFI), 582 to 602 (APVT…ILGA), and 612 to 632 (VLKG…LTTV). The segment at 365–632 (MTMGGGVLQV…AIAIKMLTTV (268 aa)) is TSUP-like.

This sequence in the N-terminal section; belongs to the peptidase S1C family. The protein in the C-terminal section; belongs to the 4-toluene sulfonate uptake permease (TSUP) (TC 2.A.102) family. Requires a metal cation as cofactor. Post-translationally, subject to proteolytic cleavage by MamE.

Its subcellular location is the magnetosome membrane. Its function is as follows. Plays 2 roles; promotes magnetite nucleation/formation and activates the MamE protease. Despite its near conservation of a protease-like sequence, this is probably not a protease. Required in conjunction with MamP for proteolysis of at least MamE, itself and MamP. May transport a solute that controls MamE's protease activity. May place individual iron atoms into the magnetite lattice. One of 7 genes (mamLQBIEMO) able to induce magnetosome membrane biogenesis; coexpression of mamLQRBIEMO in a deletion of the 17 gene mamAB operon restores magnetosome vesicle formation but not magnetite biosynthesis. This Magnetospirillum gryphiswaldense (strain DSM 6361 / JCM 21280 / NBRC 15271 / MSR-1) protein is Probable membrane transporter protein MamO.